The sequence spans 313 residues: MPIKIDKKLPAVDILSSENIFVMDDDRADHQDIRPLNILVLNLMPQKMVTETQILRHLANTPLQLTIDFLYMSSHQSKTTRAEHMETFYKTFDEVKNRYFDGLIITGAPVEHLPFEAVDYWEEFQRVIEWSKTHVFSTLHICWGAQAGLYARYGVDKHQMTRKLSGVYSQLADSSNLLFRGFDDEFYAPHSRHTEVLKEDIVNLTNLEILSYGEDMGLSVLASRDLREVYSFGHMEYDRDTLSKEYFRDLKAGKNPHIPENYFKNDDVHTTPALCWSSAAALFFSNWVNYAVYQETPFDWESPENDVSFFAYL.

Residue Cys142 is the Acyl-thioester intermediate of the active site. 2 residues coordinate substrate: Lys163 and Ser191. The Proton acceptor role is filled by His234. Residue Glu236 is part of the active site. Residue Arg248 participates in substrate binding.

This sequence belongs to the MetA family.

The protein resides in the cytoplasm. It carries out the reaction L-homoserine + acetyl-CoA = O-acetyl-L-homoserine + CoA. Its pathway is amino-acid biosynthesis; L-methionine biosynthesis via de novo pathway; O-acetyl-L-homoserine from L-homoserine: step 1/1. Its function is as follows. Transfers an acetyl group from acetyl-CoA to L-homoserine, forming acetyl-L-homoserine. This is Homoserine O-acetyltransferase from Streptococcus sanguinis (strain SK36).